Consider the following 441-residue polypeptide: ATP-dependent protease ATPase subunit HslU (441 aa).

ATP-binding positions include isoleucine 18, glycine 60–glutamate 65, aspartate 254, glutamate 319, and arginine 391.

It belongs to the ClpX chaperone family. HslU subfamily. In terms of assembly, a double ring-shaped homohexamer of HslV is capped on each side by a ring-shaped HslU homohexamer. The assembly of the HslU/HslV complex is dependent on binding of ATP.

The protein resides in the cytoplasm. ATPase subunit of a proteasome-like degradation complex; this subunit has chaperone activity. The binding of ATP and its subsequent hydrolysis by HslU are essential for unfolding of protein substrates subsequently hydrolyzed by HslV. HslU recognizes the N-terminal part of its protein substrates and unfolds these before they are guided to HslV for hydrolysis. The chain is ATP-dependent protease ATPase subunit HslU from Shewanella pealeana (strain ATCC 700345 / ANG-SQ1).